A 317-amino-acid chain; its full sequence is WSCD family member AAEL009094 (317 aa).

Residues 8 to 28 (LFGLAGTILVYIGGILFLSFV) traverse the membrane as a helical segment. 3 N-linked (GlcNAc...) asparagine glycosylation sites follow: Asn150, Asn226, and Asn232.

It belongs to the WSCD family.

It is found in the membrane. In Aedes aegypti (Yellowfever mosquito), this protein is WSCD family member AAEL009094.